We begin with the raw amino-acid sequence, 136 residues long: Large ribosomal subunit protein uL16 (136 aa).

This sequence belongs to the universal ribosomal protein uL16 family. Part of the 50S ribosomal subunit.

Its function is as follows. Binds 23S rRNA and is also seen to make contacts with the A and possibly P site tRNAs. The protein is Large ribosomal subunit protein uL16 of Rickettsia typhi (strain ATCC VR-144 / Wilmington).